The sequence spans 1371 residues: Pleckstrin homology-like domain family B member 1 (1371 aa).

The residue at position 51 (Ser-51) is a Phosphoserine. The region spanning 64-125 (TVIGSAARDI…LTQGCMLCLG (62 aa)) is the FHA domain. Residue Arg-131 is modified to Asymmetric dimethylarginine. Residues 153–182 (GPTYNPGSAESESLVNGNHTAQPATRAPSA) are disordered. A compositionally biased stretch (polar residues) spans 157–175 (NPGSAESESLVNGNHTAQP). Phosphoserine occurs at positions 192, 220, and 223. Disordered regions lie at residues 211–336 (AAGK…TDSP) and 368–573 (PSSG…RVPI). Low complexity-rich tracts occupy residues 252 to 273 (SPAFSPLSSPASSGSCASHSPS) and 296 to 312 (LQPPQSRPSGSRSSDSP). Phosphoserine is present on residues Ser-325 and Ser-335. A compositionally biased stretch (polar residues) spans 368–377 (PSSGARSQPA). Phosphoserine occurs at positions 382, 405, 431, 445, 463, 472, 491, and 503. A compositionally biased stretch (low complexity) spans 464-477 (PSLSRRALSPLPAR). Residues 483–493 (KLSREVAESPR) show a composition bias toward basic and acidic residues. Arg-514 carries the post-translational modification Omega-N-methylarginine. 2 positions are modified to phosphoserine: Ser-520 and Ser-522. The residue at position 524 (Thr-524) is a Phosphothreonine. Phosphoserine occurs at positions 535, 541, 553, 557, 565, 580, 585, and 683. A compositionally biased stretch (polar residues) spans 547–559 (GSLTGASPRQSPR). Disordered regions lie at residues 672–714 (ESGG…GAKH) and 942–1020 (GLAA…QNGT). Composition is skewed to basic and acidic residues over residues 682–696 (ESMERSDEENLKEEC) and 703–714 (QQEHEDAPGAKH). Positions 688-798 (DEENLKEECS…ETGIQKDRDK (111 aa)) form a coiled coil. Phosphoserine occurs at positions 976 and 1022. Positions 976–997 (SPLPRTRSGPLPSSSGSSSSSS) are enriched in low complexity. Positions 1124 to 1143 (SMETSISTGGNSACSPDNMS) are disordered. The stretch at 1150–1216 (MGKIEEMEKM…QQLVEKEVKL (67 aa)) forms a coiled coil. One can recognise a PH domain in the interval 1261–1364 (SKVCRGYLIK…WMDVIVTGAE (104 aa)).

This Mus musculus (Mouse) protein is Pleckstrin homology-like domain family B member 1 (Phldb1).